Consider the following 212-residue polypeptide: Glycerol-3-phosphate acyltransferase (212 aa).

5 consecutive transmembrane segments (helical) span residues 10–30 (FAAL…AVVV), 90–110 (GYGL…SLGF), 124–144 (FAVS…VAVV), 150–170 (LAAL…GGTI), and 171–191 (WPLN…LFYR).

Belongs to the PlsY family. In terms of assembly, probably interacts with PlsX.

It is found in the cell inner membrane. The catalysed reaction is an acyl phosphate + sn-glycerol 3-phosphate = a 1-acyl-sn-glycero-3-phosphate + phosphate. The protein operates within lipid metabolism; phospholipid metabolism. Its function is as follows. Catalyzes the transfer of an acyl group from acyl-phosphate (acyl-PO(4)) to glycerol-3-phosphate (G3P) to form lysophosphatidic acid (LPA). This enzyme utilizes acyl-phosphate as fatty acyl donor, but not acyl-CoA or acyl-ACP. The chain is Glycerol-3-phosphate acyltransferase from Bordetella avium (strain 197N).